A 923-amino-acid chain; its full sequence is MDSIGSSGLRQGEETLSCSEEGLPGPSDSSELVQECLQQFKVTRAQLQQIQASLLGSMEQALRGQASPAPAVRMLPTYVGSTPHGTEQGDFVVLELGATGASLRVLWVTLTGIEGHRVEPRSQEFVIPQEVMLGAGQQLFDFAAHCLSEFLDAQPVNKQGLQLGFSFSFPCHQTGLDRSTLISWTKGFRCSGVEGQDVVQLLRDAIRRQGAYNIDVVAVVNDTVGTMMGCEPGVRPCEVGLVVDTGTNACYMEEARHVAVLDEDRGRVCVSVEWGSFSDDGALGPVLTTFDHTLDHESLNPGAQRFEKMIGGLYLGELVRLVLAHLARCGVLFGGCTSPALLSQGSILLEHVAEMEDPSTGAARVHAILQDLGLSPGASDVELVQHVCAAVCTRAAQLCAAALAAVLSCLQHSREQQTLQVAVATGGRVCERHPRFCSVLQGTVMLLAPECDVSLIPSVDGGGRGVAMVTAVAARLAAHRRLLEETLAPFRLNHDQLAAVQAQMRKAMAKGLRGEASSLRMLPTFVRATPDGSERGDFLALDLGGTNFRVLLVRVTTGVQITSEIYSIPETVAQGSGQQLFDHIVDCIVDFQQKQGLSGQSLPLGFTFSFPCRQLGLDQGILLNWTKGFKASDCEGQDVVSLLREAITRRQAVELNVVAIVNDTVGTMMSCGYEDPRCEIGLIVGTGTNACYMEELRNVAGVPGDSGRMCINMEWGAFGDDGSLAMLSTRFDASVDQASINPGKQRFEKMISGMYLGEIVRHILLHLTSLGVLFRGQQIQRLQTRDIFKTKFLSEIESDSLALRQVRAILEDLGLPLTSDDALMVLEVCQAVSQRAAQLCGAGVAAVVEKIRENRGLEELAVSVGVDGTLYKLHPRFSSLVAATVRELAPRCVVTFLQSEDGSGKGAALVTAVACRLAQLTRV.

Residues 1-18 (MDSIGSSGLRQGEETLSC) are compositionally biased toward polar residues. The segment at 1–30 (MDSIGSSGLRQGEETLSCSEEGLPGPSDSS) is disordered. Hexokinase domains are found at residues 27-471 (SDSS…MVTA) and 477-912 (AAHR…LVTA). Positions 84–220 (HGTEQGDFVV…AYNIDVVAVV (137 aa)) are hexokinase small subdomain 1. An ATP-binding site is contributed by 95–102 (ELGATGAS). A D-glucose 6-phosphate-binding site is contributed by 95–104 (ELGATGASLR). D-glucose is bound by residues Ser-168, 185–186 (TK), and 221–222 (ND). The interval 221 to 460 (NDTVGTMMGC…CDVSLIPSVD (240 aa)) is hexokinase large subdomain 1. D-glucose 6-phosphate is bound by residues Asp-222 and Thr-245. D-glucose contacts are provided by residues Asn-248, Glu-273, and 304–307 (QRFE). Residue 426–428 (GGR) coordinates D-glucose 6-phosphate. Residues 438 to 439 (SV) and 542 to 547 (DLGGTN) each bind ATP. The tract at residues 531 to 661 (DGSERGDFLA…AVELNVVAIV (131 aa)) is hexokinase small subdomain 2. Residue 542–546 (DLGGT) coordinates D-glucose 6-phosphate. D-glucose contacts are provided by residues 609–610 (SF), 626–627 (TK), and 662–663 (ND). The segment at 662–901 (NDTVGTMMSC…CVVTFLQSED (240 aa)) is hexokinase large subdomain 2. The D-glucose 6-phosphate site is built by Asp-663 and Thr-686. Thr-686 provides a ligand contact to ATP. D-glucose contacts are provided by residues 688 to 689 (TN), Glu-714, and Glu-748. ATP is bound by residues 753–754 (GM), 790–794 (TKFLS), and 869–873 (TLYKL). D-glucose 6-phosphate is bound by residues 867–869 (DGT) and Ser-903.

This sequence belongs to the hexokinase family.

It carries out the reaction a D-hexose + ATP = a D-hexose 6-phosphate + ADP + H(+). It catalyses the reaction D-fructose + ATP = D-fructose 6-phosphate + ADP + H(+). The catalysed reaction is D-glucose + ATP = D-glucose 6-phosphate + ADP + H(+). Its pathway is carbohydrate metabolism; hexose metabolism. It participates in carbohydrate degradation; glycolysis; D-glyceraldehyde 3-phosphate and glycerone phosphate from D-glucose: step 1/4. Hexokinase is an allosteric enzyme inhibited by its product D-glucose 6-phosphate. Catalyzes the phosphorylation of hexose, such as D-glucose and D-fructose, to hexose 6-phosphate (D-glucose 6-phosphate and D-fructose 6-phosphate, respectively). Mediates the initial step of glycolysis by catalyzing phosphorylation of D-glucose to D-glucose 6-phosphate. The sequence is that of Hexokinase-3 from Homo sapiens (Human).